The sequence spans 404 residues: Ubiquitin-like modifier-activating enzyme 5 (404 aa).

S45 is modified (phosphoserine). Residues G83, D104, K127, N150, and N184 each coordinate ATP. Zn(2+)-binding residues include C226 and C229. The Glycyl thioester intermediate role is filled by C250. 2 residues coordinate Zn(2+): C303 and C308. A UFM1-interacting sequence (UIS) motif is present at residues 334-346 (IIHEDNEWGIELV). The interval 347 to 377 (SEVSEEELKNSSGPVPDLPEGITVAYTIPKK) is linker. 2 positions are modified to phosphoserine: S358 and S393. Positions 389-404 (DSGESLEDLMAKMKNM) match the UFC1-binding sequence (UFC) motif.

The protein belongs to the ubiquitin-activating E1 family. UBA5 subfamily. As to quaternary structure, homodimer; homodimerization is required for UFM1 activation. Interacts (via UIS motif) with UFM1; binds UFM1 via a trans-binding mechanism in which UFM1 interacts with distinct sites in both subunits of the UBA5 homodimer. Interacts (via C-terminus) with UFC1. Interacts (via UIS motif) with GABARAPL2 and, with lower affinity, with GABARAP and GABARAPL1.

The protein resides in the cytoplasm. It localises to the nucleus. Its subcellular location is the endoplasmic reticulum membrane. It is found in the golgi apparatus. E1-like enzyme which specifically catalyzes the first step in ufmylation. Activates UFM1 by first adenylating its C-terminal glycine residue with ATP, and thereafter linking this residue to the side chain of a cysteine residue in E1, yielding a UFM1-E1 thioester and free AMP. Activates UFM1 via a trans-binding mechanism, in which UFM1 interacts with distinct sites in both subunits of the UBA5 homodimer. Trans-binding also promotes stabilization of the UBA5 homodimer, and enhances ATP-binding. Transfer of UFM1 from UBA5 to the E2-like enzyme UFC1 also takes place using a trans mechanism. Ufmylation plays a key role in various processes, such as ribosome recycling, response to DNA damage, interferon response or reticulophagy (also called ER-phagy). Ufmylation is essential for erythroid differentiation of both megakaryocytes and erythrocytes. The chain is Ubiquitin-like modifier-activating enzyme 5 from Pongo abelii (Sumatran orangutan).